The primary structure comprises 365 residues: MSANDSPSGQQTTTSASLDAVRHATHDSAFLRACRREPVPHTPVWFMRQAGRSLPEYLKVREGIAMLDSCMMPELVAEITLQPVRRHKVDAAIYFSDIVVPLKAIGIDLDIKPGVGPVIAEPIRTRADLARLRDLTPEDVPYVTEAIGMLTAELGATPLIGFAGAPFTLASYLVEGGPSRNHERTKAMMYGDPQLWADLVDRLAEITGAFLKVQIEAGASAVQLFDSWVGALAPADYRRAVLPASAKVFDAVAPYGVPRIHFGVGTGELLGLMGEAGADVVGVDWRVPLNEAARRVGPGKALQGNLDPAVLFAPTPAVEEKTREVLDAAAGLEGHIFNLGHGVMPNMDPDALTRLVGYVHEQTAR.

Residues 1–17 show a composition bias toward polar residues; it reads MSANDSPSGQQTTTSAS. The segment at 1-20 is disordered; it reads MSANDSPSGQQTTTSASLDA. Substrate contacts are provided by residues 48–52, Asp-97, Tyr-172, Ser-227, and His-341; that span reads RQAGR.

The protein belongs to the uroporphyrinogen decarboxylase family. Homodimer.

It localises to the cytoplasm. It carries out the reaction uroporphyrinogen III + 4 H(+) = coproporphyrinogen III + 4 CO2. Its pathway is porphyrin-containing compound metabolism; protoporphyrin-IX biosynthesis; coproporphyrinogen-III from 5-aminolevulinate: step 4/4. In terms of biological role, catalyzes the decarboxylation of four acetate groups of uroporphyrinogen-III to yield coproporphyrinogen-III. In Streptomyces griseus subsp. griseus (strain JCM 4626 / CBS 651.72 / NBRC 13350 / KCC S-0626 / ISP 5235), this protein is Uroporphyrinogen decarboxylase.